The primary structure comprises 162 residues: UPF0260 protein CC_3276 (162 aa).

It belongs to the UPF0260 family.

This chain is UPF0260 protein CC_3276, found in Caulobacter vibrioides (strain ATCC 19089 / CIP 103742 / CB 15) (Caulobacter crescentus).